The primary structure comprises 344 residues: Nuclear distribution protein nudE-like 1-A (344 aa).

Residues 26–187 (YKKSYKEAQE…RQELAVRDTR (162 aa)) are a coiled coil. Residues 181-190 (LAVRDTRSEV) are compositionally biased toward basic and acidic residues. Disordered regions lie at residues 181–209 (LAVR…TDSA) and 322–344 (PGDG…VLSV).

This sequence belongs to the nudE family. Phosphorylated in mitosis.

Its subcellular location is the cytoplasm. The protein localises to the cytoskeleton. It is found in the microtubule organizing center. The protein resides in the centrosome. It localises to the spindle. In terms of biological role, required for organization of the cellular microtubule array and microtubule anchoring at the centrosome. Positively regulates the activity of the minus-end directed microtubule motor protein dynein. May enhance dynein-mediated microtubule sliding by targeting dynein to the microtubule plus end. The polypeptide is Nuclear distribution protein nudE-like 1-A (ndel1a) (Danio rerio (Zebrafish)).